We begin with the raw amino-acid sequence, 95 residues long: Small ribosomal subunit protein uS19 (95 aa).

The interval 76 to 95 (PTRRFGGHADKKAKKGELKK) is disordered. Positions 82–95 (GHADKKAKKGELKK) are enriched in basic and acidic residues.

This sequence belongs to the universal ribosomal protein uS19 family.

Its function is as follows. Protein S19 forms a complex with S13 that binds strongly to the 16S ribosomal RNA. In Thermotoga maritima (strain ATCC 43589 / DSM 3109 / JCM 10099 / NBRC 100826 / MSB8), this protein is Small ribosomal subunit protein uS19 (rpsS).